The sequence spans 256 residues: DNA repair protein RecO (256 aa).

It belongs to the RecO family.

Involved in DNA repair and RecF pathway recombination. This is DNA repair protein RecO from Bacillus pumilus (strain SAFR-032).